Here is a 370-residue protein sequence, read N- to C-terminus: DNA primase large subunit PriL (370 aa).

Residues Cys268, Cys341, Cys350, and Cys354 each coordinate [4Fe-4S] cluster.

Belongs to the eukaryotic-type primase large subunit family. As to quaternary structure, heterodimer of a small subunit (PriS) and a large subunit (PriL). The cofactor is [4Fe-4S] cluster.

In terms of biological role, regulatory subunit of DNA primase, an RNA polymerase that catalyzes the synthesis of short RNA molecules used as primers for DNA polymerase during DNA replication. Stabilizes and modulates the activity of the small subunit, increasing the rate of DNA synthesis, and conferring RNA synthesis capability. The DNA polymerase activity may enable DNA primase to also catalyze primer extension after primer synthesis. May also play a role in DNA repair. The sequence is that of DNA primase large subunit PriL from Archaeoglobus fulgidus (strain ATCC 49558 / DSM 4304 / JCM 9628 / NBRC 100126 / VC-16).